Reading from the N-terminus, the 58-residue chain is MFTMKKSLLLLFFLGTISMSLCEEKRDADEEETEGEAKMEDIKRAEAVPPGFTPFRKP.

Positions 1–22 are cleaved as a signal peptide; it reads MFTMKKSLLLLFFLGTISMSLC. The propeptide occupies 23–43; the sequence is EEKRDADEEETEGEAKMEDIK. The tract at residues 25-58 is disordered; sequence KRDADEEETEGEAKMEDIKRAEAVPPGFTPFRKP. A compositionally biased stretch (basic and acidic residues) spans 35–46; that stretch reads GEAKMEDIKRAE.

In terms of tissue distribution, expressed by the skin glands.

Its subcellular location is the secreted. In terms of biological role, induces contraction of intestinal smooth muscle in isolated guinea pig ileum. May induce relaxation of arterial smooth muscle. May target bradykinin receptors (BDKRB). Lacks antibacterial activity against the Gram-positive bacterium S.aureus and the Gram-negative bacteria E.coli and B.dysenteria, and antifungal activity against C.albicans. In Hylarana nigrovittata (Black-striped frog), this protein is Ranakinin-N.